The following is a 570-amino-acid chain: Sulfite reductase [NADPH] hemoprotein beta-component (570 aa).

4 residues coordinate [4Fe-4S] cluster: cysteine 434, cysteine 440, cysteine 479, and cysteine 483. Siroheme is bound at residue cysteine 483.

This sequence belongs to the nitrite and sulfite reductase 4Fe-4S domain family. In terms of assembly, alpha(8)-beta(8). The alpha component is a flavoprotein, the beta component is a hemoprotein. Siroheme serves as cofactor. It depends on [4Fe-4S] cluster as a cofactor.

It carries out the reaction hydrogen sulfide + 3 NADP(+) + 3 H2O = sulfite + 3 NADPH + 4 H(+). It participates in sulfur metabolism; hydrogen sulfide biosynthesis; hydrogen sulfide from sulfite (NADPH route): step 1/1. Its function is as follows. Component of the sulfite reductase complex that catalyzes the 6-electron reduction of sulfite to sulfide. This is one of several activities required for the biosynthesis of L-cysteine from sulfate. The chain is Sulfite reductase [NADPH] hemoprotein beta-component from Salmonella paratyphi B (strain ATCC BAA-1250 / SPB7).